The following is a 360-amino-acid chain: Membrane-bound lytic murein transglycosylase C (360 aa).

The signal sequence occupies residues 1–16 (MKKYLALALIAPLLVS). The N-palmitoyl cysteine moiety is linked to residue Cys-17. The S-diacylglycerol cysteine moiety is linked to residue Cys-17.

This sequence belongs to the transglycosylase Slt family.

Its subcellular location is the cell outer membrane. The catalysed reaction is Exolytic cleavage of the (1-&gt;4)-beta-glycosidic linkage between N-acetylmuramic acid (MurNAc) and N-acetylglucosamine (GlcNAc) residues in peptidoglycan, from either the reducing or the non-reducing ends of the peptidoglycan chains, with concomitant formation of a 1,6-anhydrobond in the MurNAc residue.. Murein-degrading enzyme. May play a role in recycling of muropeptides during cell elongation and/or cell division. This Klebsiella pneumoniae subsp. pneumoniae (strain ATCC 700721 / MGH 78578) protein is Membrane-bound lytic murein transglycosylase C.